Here is a 360-residue protein sequence, read N- to C-terminus: Cyclin-Y-like protein 2 (360 aa).

Residues 204-286 (RLTAEFAIVS…FLKLINYNIG (83 aa)) form the Cyclin N-terminal domain.

It belongs to the cyclin family. Cyclin Y subfamily.

The chain is Cyclin-Y-like protein 2 (CCNYL2) from Macaca fascicularis (Crab-eating macaque).